The chain runs to 199 residues: Probable GTP-binding protein EngB (199 aa).

One can recognise an EngB-type G domain in the interval 25-199 (IGMEVAFVGY…LKRVLNNWLR (175 aa)). The Mg(2+) site is built by S40 and T62.

This sequence belongs to the TRAFAC class TrmE-Era-EngA-EngB-Septin-like GTPase superfamily. EngB GTPase family. Requires Mg(2+) as cofactor.

In terms of biological role, necessary for normal cell division and for the maintenance of normal septation. This Blochmanniella pennsylvanica (strain BPEN) protein is Probable GTP-binding protein EngB.